A 198-amino-acid polypeptide reads, in one-letter code: Ribonuclease HII (198 aa).

One can recognise an RNase H type-2 domain in the interval 11-198; that stretch reads NLIAGVDEVG…GPVKRVLGLV (188 aa). The a divalent metal cation site is built by Asp-17, Glu-18, and Asp-109.

The protein belongs to the RNase HII family. Mn(2+) is required as a cofactor. Mg(2+) serves as cofactor.

The protein resides in the cytoplasm. The enzyme catalyses Endonucleolytic cleavage to 5'-phosphomonoester.. Its function is as follows. Endonuclease that specifically degrades the RNA of RNA-DNA hybrids. This Yersinia pseudotuberculosis serotype O:3 (strain YPIII) protein is Ribonuclease HII.